The sequence spans 750 residues: Photosystem I P700 chlorophyll a apoprotein A1 (750 aa).

8 helical membrane-spanning segments follow: residues Val70 to Ala93, Leu156 to His179, Leu195 to Leu219, Ile291 to Tyr309, Trp346 to Tyr369, Leu385 to Val411, Ala433 to His455, and Phe531 to Leu549. [4Fe-4S] cluster is bound by residues Cys573 and Cys582. The next 2 membrane-spanning stretches (helical) occupy residues His589–Trp610 and Leu664–Phe686. His675 is a chlorophyll a' binding site. 2 residues coordinate chlorophyll a: Met683 and Tyr691. Phylloquinone is bound at residue Trp692. The chain crosses the membrane as a helical span at residues Ala724–Ala744.

Belongs to the PsaA/PsaB family. As to quaternary structure, the PsaA/B heterodimer binds the P700 chlorophyll special pair and subsequent electron acceptors. PSI consists of a core antenna complex that captures photons, and an electron transfer chain that converts photonic excitation into a charge separation. The eukaryotic PSI reaction center is composed of at least 11 subunits. It depends on P700 is a chlorophyll a/chlorophyll a' dimer, A0 is one or more chlorophyll a, A1 is one or both phylloquinones and FX is a shared 4Fe-4S iron-sulfur center. as a cofactor.

It localises to the plastid. Its subcellular location is the chloroplast thylakoid membrane. It carries out the reaction reduced [plastocyanin] + hnu + oxidized [2Fe-2S]-[ferredoxin] = oxidized [plastocyanin] + reduced [2Fe-2S]-[ferredoxin]. Functionally, psaA and PsaB bind P700, the primary electron donor of photosystem I (PSI), as well as the electron acceptors A0, A1 and FX. PSI is a plastocyanin-ferredoxin oxidoreductase, converting photonic excitation into a charge separation, which transfers an electron from the donor P700 chlorophyll pair to the spectroscopically characterized acceptors A0, A1, FX, FA and FB in turn. Oxidized P700 is reduced on the lumenal side of the thylakoid membrane by plastocyanin. The protein is Photosystem I P700 chlorophyll a apoprotein A1 of Piper cenocladum (Ant piper).